A 79-amino-acid polypeptide reads, in one-letter code: Pulmonary surfactant-associated protein B (79 aa).

The Saposin B-type domain maps to 4–79 (PLPFCWLCRT…VCGLVLRCSS (76 aa)). Cystine bridges form between Cys-8/Cys-77, Cys-11/Cys-71, and Cys-35/Cys-46.

In terms of assembly, homodimer; disulfide-linked.

The protein localises to the secreted. It localises to the extracellular space. It is found in the surface film. Its function is as follows. Pulmonary surfactant-associated proteins promote alveolar stability by lowering the surface tension at the air-liquid interface in the peripheral air spaces. SP-B increases the collapse pressure of palmitic acid to nearly 70 millinewtons per meter. The polypeptide is Pulmonary surfactant-associated protein B (SFTPB) (Sus scrofa (Pig)).